The following is a 250-amino-acid chain: tRNA (guanine-N(7)-)-methyltransferase (250 aa).

S-adenosyl-L-methionine-binding residues include Glu-86, Glu-111, Asp-138, and Asp-161. Asp-161 is a catalytic residue. Residues Lys-165, Asp-197, and 229-232 (TEFE) each bind substrate.

This sequence belongs to the class I-like SAM-binding methyltransferase superfamily. TrmB family.

It carries out the reaction guanosine(46) in tRNA + S-adenosyl-L-methionine = N(7)-methylguanosine(46) in tRNA + S-adenosyl-L-homocysteine. The protein operates within tRNA modification; N(7)-methylguanine-tRNA biosynthesis. Its function is as follows. Catalyzes the formation of N(7)-methylguanine at position 46 (m7G46) in tRNA. The polypeptide is tRNA (guanine-N(7)-)-methyltransferase (Treponema pallidum (strain Nichols)).